The primary structure comprises 441 residues: Amino-acid acetyltransferase (441 aa).

One can recognise an N-acetyltransferase domain in the interval 295–434; that stretch reads EKVRGAGIDD…KALYNFQRRS (140 aa).

Belongs to the acetyltransferase family. ArgA subfamily.

Its subcellular location is the cytoplasm. It catalyses the reaction L-glutamate + acetyl-CoA = N-acetyl-L-glutamate + CoA + H(+). It functions in the pathway amino-acid biosynthesis; L-arginine biosynthesis; N(2)-acetyl-L-ornithine from L-glutamate: step 1/4. This Photobacterium profundum (strain SS9) protein is Amino-acid acetyltransferase.